The sequence spans 403 residues: Tryptophan synthase beta chain (403 aa).

K93 bears the N6-(pyridoxal phosphate)lysine mark.

It belongs to the TrpB family. In terms of assembly, tetramer of two alpha and two beta chains. Requires pyridoxal 5'-phosphate as cofactor.

It catalyses the reaction (1S,2R)-1-C-(indol-3-yl)glycerol 3-phosphate + L-serine = D-glyceraldehyde 3-phosphate + L-tryptophan + H2O. Its pathway is amino-acid biosynthesis; L-tryptophan biosynthesis; L-tryptophan from chorismate: step 5/5. The beta subunit is responsible for the synthesis of L-tryptophan from indole and L-serine. This chain is Tryptophan synthase beta chain, found in Acinetobacter baylyi (strain ATCC 33305 / BD413 / ADP1).